We begin with the raw amino-acid sequence, 527 residues long: FAD-dependent monooxygenase CTB5 (527 aa).

The region spanning 78–255 (SDLHPSCIAL…TAVTLKTFGQ (178 aa)) is the FAD-binding PCMH-type domain.

The protein belongs to the oxygen-dependent FAD-linked oxidoreductase family.

It functions in the pathway mycotoxin biosynthesis. FAD-dependent monooxygenase; part of the gene cluster that mediates the biosynthesis of cercosporin, a light-activated, non-host-selective toxin. The perylenequinone chromophore of cercosporin absorbs light energy to attain an electronically-activated triplet state and produces active oxygen species such as the hydroxyl radical, superoxide, hydrogen peroxide or singlet oxygen upon reaction with oxygen molecules. These reactive oxygen species cause damage to various cellular components including lipids, proteins and nucleic acids. The first step of cercosporin biosynthesis is performed by the polyketide synthase CTB1 which catalyzes the formation of nor-toralactone. The starter unit acyltransferase (SAT) domain of CTB1 initiates polyketide extension by the selective utilization of acetyl-CoA, which is elongated to the heptaketide in the beta-ketoacyl synthase (KS) domain by successive condensations with six malonyl units introduced by the malonyl acyltransferase (MAT) domain. The product template (PT) domain catalyzes C4-C9 and C2-C11 aldol cyclizations and dehydrations to a trihydroxynaphthalene, which is thought to be delivered to the thioesterase (TE) domain for product release. The bifunctional enzyme CTB3 then methylates nor-toralactone to toralactone before conducting an unusual oxidative aromatic ring opening. The O-methyltransferase CTB2 further methylates the nascent OH-6 of the CBT3 product, blocking further oxidation at this site before the reductase CTB6 reduces the 2-oxopropyl ketone at position C7, giving naphthalene. The FAD-dependent monooxygenase CTB5 in concert with the multicopper oxidase CTB12 are responsible for homodimerization of naphthalene with CTB7 installing the dioxepine moiety, finally producing cercosporin. The fasciclin domain-containing protein CTB11 might act with CTB5 and CTB12 whereas the roles of CTB9 and CTB10 have still to be elucidated. This chain is FAD-dependent monooxygenase CTB5, found in Cercospora beticola (Sugarbeet leaf spot fungus).